The chain runs to 153 residues: Putative pre-16S rRNA nuclease (153 aa).

This sequence belongs to the YqgF nuclease family.

Its subcellular location is the cytoplasm. Could be a nuclease involved in processing of the 5'-end of pre-16S rRNA. The sequence is that of Putative pre-16S rRNA nuclease from Chloroflexus aurantiacus (strain ATCC 29366 / DSM 635 / J-10-fl).